A 351-amino-acid chain; its full sequence is Phenylacetaldoxime dehydratase (351 aa).

This sequence belongs to the heme-containing dehydratase family. As to quaternary structure, monomer. The cofactor is heme b.

It carries out the reaction (Z)-phenylacetaldehyde oxime = phenylacetonitrile + H2O. Its function is as follows. Catalyzes the stoichiometric dehydration of Z-phenylacetaldoxime to phenylacetonitrile. Prefers the Z-form of phenylacetaldoxime over its E-isomer. The protein is Phenylacetaldoxime dehydratase of Bacillus sp. (strain OxB-1).